The primary structure comprises 488 residues: Pup--protein ligase (488 aa).

Mg(2+) is bound at residue glutamate 34. Arginine 77 is a binding site for ATP. Residue tyrosine 79 participates in Mg(2+) binding. Aspartate 81 acts as the Proton acceptor in catalysis. Glutamate 87 contacts Mg(2+). ATP contacts are provided by threonine 90 and tryptophan 453.

The protein belongs to the Pup ligase/Pup deamidase family. Pup-conjugating enzyme subfamily.

It catalyses the reaction ATP + [prokaryotic ubiquitin-like protein]-L-glutamate + [protein]-L-lysine = ADP + phosphate + N(6)-([prokaryotic ubiquitin-like protein]-gamma-L-glutamyl)-[protein]-L-lysine.. The protein operates within protein degradation; proteasomal Pup-dependent pathway. It functions in the pathway protein modification; protein pupylation. Functionally, catalyzes the covalent attachment of the prokaryotic ubiquitin-like protein modifier Pup to the proteasomal substrate proteins, thereby targeting them for proteasomal degradation. This tagging system is termed pupylation. The ligation reaction involves the side-chain carboxylate of the C-terminal glutamate of Pup and the side-chain amino group of a substrate lysine. The protein is Pup--protein ligase of Bifidobacterium dentium (strain ATCC 27534 / DSM 20436 / JCM 1195 / Bd1).